Here is a 299-residue protein sequence, read N- to C-terminus: Bifunctional protein FolD 2 (299 aa).

Belongs to the tetrahydrofolate dehydrogenase/cyclohydrolase family. In terms of assembly, homodimer.

The enzyme catalyses (6R)-5,10-methylene-5,6,7,8-tetrahydrofolate + NADP(+) = (6R)-5,10-methenyltetrahydrofolate + NADPH. The catalysed reaction is (6R)-5,10-methenyltetrahydrofolate + H2O = (6R)-10-formyltetrahydrofolate + H(+). It participates in one-carbon metabolism; tetrahydrofolate interconversion. In terms of biological role, catalyzes the oxidation of 5,10-methylenetetrahydrofolate to 5,10-methenyltetrahydrofolate and then the hydrolysis of 5,10-methenyltetrahydrofolate to 10-formyltetrahydrofolate. The protein is Bifunctional protein FolD 2 (FOLD2) of Arabidopsis thaliana (Mouse-ear cress).